The sequence spans 133 residues: UPF0102 protein bll0669 (133 aa).

The protein belongs to the UPF0102 family.

This chain is UPF0102 protein bll0669, found in Bradyrhizobium diazoefficiens (strain JCM 10833 / BCRC 13528 / IAM 13628 / NBRC 14792 / USDA 110).